Consider the following 93-residue polypeptide: Progonadoliberin-2 (93 aa).

A signal peptide spans 1–24; sequence MACQRHLLFLLLVLFAVSTQLSHG. Position 25 is a pyrrolidone carboxylic acid (Gln25). A Glycine amide modification is found at Gly34.

Belongs to the GnRH family. As to expression, midbrain and hindbrain.

It is found in the secreted. Its function is as follows. Stimulates the secretion of gonadotropins. This Aquarana catesbeiana (American bullfrog) protein is Progonadoliberin-2 (gnrh2).